A 312-amino-acid chain; its full sequence is Ribonuclease HIII (312 aa).

An RNase H type-2 domain is found at 95 to 312 (MSILGSDEVG…TEKAFRLLKK (218 aa)). Positions 101, 102, and 206 each coordinate a divalent metal cation.

Belongs to the RNase HII family. RnhC subfamily. Mn(2+) serves as cofactor. The cofactor is Mg(2+).

It is found in the cytoplasm. The catalysed reaction is Endonucleolytic cleavage to 5'-phosphomonoester.. Functionally, endonuclease that specifically degrades the RNA of RNA-DNA hybrids. The chain is Ribonuclease HIII from Bacillus mycoides (strain KBAB4) (Bacillus weihenstephanensis).